We begin with the raw amino-acid sequence, 728 residues long: Probable subtilase-type serine protease DR_A0283 (728 aa).

The first 22 residues, 1 to 22 (MPGALPMKKISLAVLSLTTLLA), serve as a signal peptide directing secretion. Residues 23–148 (ACGQPQTSPQ…RTAQDQLGAQ (126 aa)) constitute a propeptide that is removed on maturation. The Peptidase S8 domain occupies 159–471 (QYALDSNHLH…YGLIRMDKLA (313 aa)). Catalysis depends on charge relay system residues Asp-188, His-242, and Ser-412.

It belongs to the peptidase S8 family.

It localises to the secreted. This chain is Probable subtilase-type serine protease DR_A0283, found in Deinococcus radiodurans (strain ATCC 13939 / DSM 20539 / JCM 16871 / CCUG 27074 / LMG 4051 / NBRC 15346 / NCIMB 9279 / VKM B-1422 / R1).